Consider the following 480-residue polypeptide: UDP-N-acetylmuramoylalanine--D-glutamate ligase (480 aa).

127-133 (GTNGKTT) is a binding site for ATP.

It belongs to the MurCDEF family.

The protein resides in the cytoplasm. It catalyses the reaction UDP-N-acetyl-alpha-D-muramoyl-L-alanine + D-glutamate + ATP = UDP-N-acetyl-alpha-D-muramoyl-L-alanyl-D-glutamate + ADP + phosphate + H(+). It participates in cell wall biogenesis; peptidoglycan biosynthesis. Cell wall formation. Catalyzes the addition of glutamate to the nucleotide precursor UDP-N-acetylmuramoyl-L-alanine (UMA). The polypeptide is UDP-N-acetylmuramoylalanine--D-glutamate ligase (Tropheryma whipplei (strain Twist) (Whipple's bacillus)).